Reading from the N-terminus, the 426-residue chain is Glutamate-1-semialdehyde 2,1-aminomutase (426 aa).

An N6-(pyridoxal phosphate)lysine modification is found at lysine 265.

Belongs to the class-III pyridoxal-phosphate-dependent aminotransferase family. HemL subfamily. As to quaternary structure, homodimer. The cofactor is pyridoxal 5'-phosphate.

The protein resides in the cytoplasm. The enzyme catalyses (S)-4-amino-5-oxopentanoate = 5-aminolevulinate. It participates in porphyrin-containing compound metabolism; protoporphyrin-IX biosynthesis; 5-aminolevulinate from L-glutamyl-tRNA(Glu): step 2/2. In Akkermansia muciniphila (strain ATCC BAA-835 / DSM 22959 / JCM 33894 / BCRC 81048 / CCUG 64013 / CIP 107961 / Muc), this protein is Glutamate-1-semialdehyde 2,1-aminomutase.